The sequence spans 666 residues: DNA ligase (666 aa).

NAD(+)-binding positions include 31-35 (DKEFD), 80-81 (SL), and glutamate 110. The N6-AMP-lysine intermediate role is filled by lysine 112. Positions 133, 170, 285, and 309 each coordinate NAD(+). Zn(2+) is bound by residues cysteine 404, cysteine 407, cysteine 422, and cysteine 428. The region spanning 588-666 (GYTDKLAGQS…SEDEFLKLIS (79 aa)) is the BRCT domain.

It belongs to the NAD-dependent DNA ligase family. LigA subfamily. Mg(2+) is required as a cofactor. It depends on Mn(2+) as a cofactor.

The enzyme catalyses NAD(+) + (deoxyribonucleotide)n-3'-hydroxyl + 5'-phospho-(deoxyribonucleotide)m = (deoxyribonucleotide)n+m + AMP + beta-nicotinamide D-nucleotide.. In terms of biological role, DNA ligase that catalyzes the formation of phosphodiester linkages between 5'-phosphoryl and 3'-hydroxyl groups in double-stranded DNA using NAD as a coenzyme and as the energy source for the reaction. It is essential for DNA replication and repair of damaged DNA. This Bacteroides thetaiotaomicron (strain ATCC 29148 / DSM 2079 / JCM 5827 / CCUG 10774 / NCTC 10582 / VPI-5482 / E50) protein is DNA ligase.